The following is a 37-amino-acid chain: Large ribosomal subunit protein bL36c (37 aa).

The protein belongs to the bacterial ribosomal protein bL36 family.

The protein resides in the plastid. It localises to the chloroplast. The polypeptide is Large ribosomal subunit protein bL36c (Chaetosphaeridium globosum (Charophycean green alga)).